A 363-amino-acid polypeptide reads, in one-letter code: Large ribosomal subunit protein uL4A (363 aa).

Serine 87 bears the Phosphoserine mark. Residues 280 to 363 (PENIISNADV…EKFLTVLHEN (84 aa)) are C-terminal-extended nuclear localization signal.

This sequence belongs to the universal ribosomal protein uL4 family. As to quaternary structure, component of the large ribosomal subunit (LSU). Mature yeast ribosomes consist of a small (40S) and a large (60S) subunit. The 40S small subunit contains 1 molecule of ribosomal RNA (18S rRNA) and at least 33 different proteins. The large 60S subunit contains 3 rRNA molecules (25S, 5.8S and 5S rRNA) and at least 46 different proteins. uL4 is associated with the polypeptide exit tunnel. uL4 interacts with its chaperone ACL4 and the nuclear import receptor KAP104.

Its subcellular location is the cytoplasm. It is found in the nucleus. In terms of biological role, component of the ribosome, a large ribonucleoprotein complex responsible for the synthesis of proteins in the cell. The small ribosomal subunit (SSU) binds messenger RNAs (mRNAs) and translates the encoded message by selecting cognate aminoacyl-transfer RNA (tRNA) molecules. The large subunit (LSU) contains the ribosomal catalytic site termed the peptidyl transferase center (PTC), which catalyzes the formation of peptide bonds, thereby polymerizing the amino acids delivered by tRNAs into a polypeptide chain. The nascent polypeptides leave the ribosome through a tunnel in the LSU and interact with protein factors that function in enzymatic processing, targeting, and the membrane insertion of nascent chains at the exit of the ribosomal tunnel. uL4 participates in the regulation of the accumulation of its own mRNA. This chain is Large ribosomal subunit protein uL4A (rpl402), found in Schizosaccharomyces pombe (strain 972 / ATCC 24843) (Fission yeast).